Consider the following 81-residue polypeptide: Photosystem I iron-sulfur center (81 aa).

2 4Fe-4S ferredoxin-type domains span residues 2 to 31 and 39 to 68; these read VHVV…MVPW and IASS…IRVY. [4Fe-4S] cluster is bound by residues Cys11, Cys14, Cys17, Cys21, Cys48, Cys51, Cys54, and Cys58.

The eukaryotic PSI reaction center is composed of at least 11 subunits. [4Fe-4S] cluster is required as a cofactor.

The protein resides in the plastid. Its subcellular location is the chloroplast thylakoid membrane. It carries out the reaction reduced [plastocyanin] + hnu + oxidized [2Fe-2S]-[ferredoxin] = oxidized [plastocyanin] + reduced [2Fe-2S]-[ferredoxin]. Its function is as follows. Apoprotein for the two 4Fe-4S centers FA and FB of photosystem I (PSI); essential for photochemical activity. FB is the terminal electron acceptor of PSI, donating electrons to ferredoxin. The C-terminus interacts with PsaA/B/D and helps assemble the protein into the PSI complex. Required for binding of PsaD and PsaE to PSI. PSI is a plastocyanin/cytochrome c6-ferredoxin oxidoreductase, converting photonic excitation into a charge separation, which transfers an electron from the donor P700 chlorophyll pair to the spectroscopically characterized acceptors A0, A1, FX, FA and FB in turn. The sequence is that of Photosystem I iron-sulfur center from Cyanidium caldarium (Red alga).